The primary structure comprises 668 residues: Threonine--tRNA ligase (668 aa).

Positions 1 to 64 (MSEAIFLTFP…ADGKIEIITR (64 aa)) constitute a TGS domain. Positions 245–553 (DHRKLGREMD…LIENFAGHLP (309 aa)) are catalytic. 3 residues coordinate Zn(2+): Cys-347, His-398, and His-530.

It belongs to the class-II aminoacyl-tRNA synthetase family. Homodimer. Zn(2+) is required as a cofactor.

It localises to the cytoplasm. The catalysed reaction is tRNA(Thr) + L-threonine + ATP = L-threonyl-tRNA(Thr) + AMP + diphosphate + H(+). Catalyzes the attachment of threonine to tRNA(Thr) in a two-step reaction: L-threonine is first activated by ATP to form Thr-AMP and then transferred to the acceptor end of tRNA(Thr). Also edits incorrectly charged L-seryl-tRNA(Thr). The chain is Threonine--tRNA ligase from Rhizobium leguminosarum bv. trifolii (strain WSM2304).